A 256-amino-acid polypeptide reads, in one-letter code: uncharacterized protein (256 aa).

A coiled-coil region spans residues 213-243 (TMSMEAKLEAAKKTLEKFKQEAASKRAKRTK). Residues 231-256 (KQEAASKRAKRTKPSGSKTTRSTGRK) are disordered. Positions 244-256 (PSGSKTTRSTGRK) are enriched in polar residues.

This is an uncharacterized protein from Acanthamoeba polyphaga (Amoeba).